Reading from the N-terminus, the 137-residue chain is Small ribosomal subunit protein bS16 (137 aa).

This sequence belongs to the bacterial ribosomal protein bS16 family.

The polypeptide is Small ribosomal subunit protein bS16 (Leuconostoc citreum (strain KM20)).